The following is a 252-amino-acid chain: Ditrans,polycis-undecaprenyl-diphosphate synthase ((2E,6E)-farnesyl-diphosphate specific) (252 aa).

The active site involves Asp-25. Residue Asp-25 participates in Mg(2+) binding. Residues Gly-26 to Arg-29, Trp-30, Arg-38, His-42, and Ser-70 to Glu-72 contribute to the substrate site. The Proton acceptor role is filled by Asn-73. Substrate is bound by residues Trp-74, Arg-76, and Arg-193. His-198 serves as a coordination point for Mg(2+). Arg-199 to Ser-201 serves as a coordination point for substrate. A Mg(2+)-binding site is contributed by Glu-212.

Belongs to the UPP synthase family. Homodimer. Requires Mg(2+) as cofactor.

The enzyme catalyses 8 isopentenyl diphosphate + (2E,6E)-farnesyl diphosphate = di-trans,octa-cis-undecaprenyl diphosphate + 8 diphosphate. Its function is as follows. Catalyzes the sequential condensation of isopentenyl diphosphate (IPP) with (2E,6E)-farnesyl diphosphate (E,E-FPP) to yield (2Z,6Z,10Z,14Z,18Z,22Z,26Z,30Z,34E,38E)-undecaprenyl diphosphate (di-trans,octa-cis-UPP). UPP is the precursor of glycosyl carrier lipid in the biosynthesis of bacterial cell wall polysaccharide components such as peptidoglycan and lipopolysaccharide. The sequence is that of Ditrans,polycis-undecaprenyl-diphosphate synthase ((2E,6E)-farnesyl-diphosphate specific) from Salmonella typhi.